The primary structure comprises 533 residues: (E)-beta-farnesene synthase (533 aa).

Mg(2+) is bound by residues Asp-286, Asp-290, Asn-430, Ser-434, and Glu-438. The short motif at 286–290 is the DDXXD motif element; it reads DDMMD.

The protein belongs to the terpene synthase family. Mg(2+) serves as cofactor. The cofactor is Co(2+). It depends on Mn(2+) as a cofactor.

Its subcellular location is the cytoplasm. It catalyses the reaction (2E,6E)-farnesyl diphosphate = (E)-beta-farnesene + diphosphate. It participates in secondary metabolite biosynthesis; terpenoid biosynthesis. In terms of biological role, sesquiterpene cyclase catalyzing the production of sixfold more beta-farnesene than alpha-bergamotene from farnesyl diphosphate. Involved in indirect defense by producing volatile signals attracting natural enemies of herbivores. This chain is (E)-beta-farnesene synthase, found in Zea diploperennis (Diploperennial teosinte).